The chain runs to 527 residues: L-amino-acid oxidase (527 aa).

Residues 1-27 (MDLHRAPWKSSAAAAVLLLALFSGAAA) form the signal peptide. Residues Cys-37 and Cys-200 are joined by a disulfide bond. Asn-58 is a glycosylation site (N-linked (GlcNAc...) asparagine). FAD-binding positions include 70 to 71 (VA), 90 to 91 (EA), Arg-98, 114 to 117 (GAMR), and Val-288. Arg-117 contributes to the substrate binding site. Asn-393 carries an N-linked (GlcNAc...) asparagine glycan. Position 403 (Tyr-403) interacts with substrate. Residues Glu-485 and 492–497 (AWMESA) contribute to the FAD site. Substrate is bound at residue 492-493 (AW).

In terms of assembly, homodimer. FAD serves as cofactor. As to expression, expression mainly observed in plasma, spleen, kidney and gills with low levels detected in blood and no expression detected in brain, liver, heart, muscle or intestine (at protein level).

The protein resides in the secreted. It carries out the reaction an L-alpha-amino acid + O2 + H2O = a 2-oxocarboxylate + H2O2 + NH4(+). Its function is as follows. Inhibits the growth of both Gram-negative and Gram-positive bacteria. Displays strong antibacterial activity towards V.cholerae and E.tarda. Causes deformation of the surface of S.aureus and the formation of pores on the surface of E.coli. Strong antiparasitic activity is seen towards C.irritans, T.brucei and I.multifiliis. Cilia of treated theronts are lost and the macronucleus swells, inducing cell membrane rupture and efflux of the cytoplasm. The chain is L-amino-acid oxidase from Siganus canaliculatus (White-spotted spinefoot).